The following is a 1158-amino-acid chain: ATP-dependent helicase/deoxyribonuclease subunit B (1158 aa).

One can recognise a UvrD-like helicase ATP-binding domain in the interval 1 to 275 (MTLHAYLGRA…QYFNQLYRFN (275 aa)). Residue 8–15 (GRAGTGKS) coordinates ATP. The 315-residue stretch at 269 to 583 (NQLYRFNNQD…SIGTMDLAKV (315 aa)) folds into the UvrD-like helicase C-terminal domain. Residues Cys784, Cys1112, Cys1115, and Cys1121 each contribute to the [4Fe-4S] cluster site.

It belongs to the helicase family. AddB/RexB type 1 subfamily. In terms of assembly, heterodimer of AddA and AddB. It depends on Mg(2+) as a cofactor. The cofactor is [4Fe-4S] cluster.

Its function is as follows. The heterodimer acts as both an ATP-dependent DNA helicase and an ATP-dependent, dual-direction single-stranded exonuclease. Recognizes the chi site generating a DNA molecule suitable for the initiation of homologous recombination. The AddB subunit has 5' -&gt; 3' nuclease activity but not helicase activity. The protein is ATP-dependent helicase/deoxyribonuclease subunit B of Staphylococcus aureus (strain MW2).